The following is a 71-amino-acid chain: Small ribosomal subunit protein bS18 (71 aa).

The protein belongs to the bacterial ribosomal protein bS18 family. In terms of assembly, part of the 30S ribosomal subunit. Forms a tight heterodimer with protein bS6.

In terms of biological role, binds as a heterodimer with protein bS6 to the central domain of the 16S rRNA, where it helps stabilize the platform of the 30S subunit. This chain is Small ribosomal subunit protein bS18, found in Synechocystis sp. (strain ATCC 27184 / PCC 6803 / Kazusa).